A 672-amino-acid chain; its full sequence is MLKVTTAHIHFNRDNTPVSEQFDDIYFSTADGLEESRYVFQEGNNLWRRWLQFGENHFVIAETGFGTGLNFLAVTALFREFRTQYPDSPLKRLFFISFEKYPMSCADLRSAHQAYPQFNSLAEQLRQNWLQPIVGCYRFHFEETVLDLWFGDIADNLPQLGDYMVNKIDAWFLDGFAPSKNPEMWNENLYKQMFRYTKPAGTFATFTAASAVKKGLESAGFSLQKRKGFGKKRECLQGFKPLNAEQNPAVHTPWLLSRSATLSENTDIAIIGGGISSLFSAISLLQRGANVTLYCEDEQPALNASGNKQGAFYPQLSDDDIHNIRFYIHAFAYGQQQLRWAIQQGIEFEHEFCGVALCAYDEKSAVKLAKISDYDWDTSLYQPLNQQELSEKAGLPLPCGGGFIPQGAWLAPRQFVQNGFAFAQKCGLKLKTFEKITALSQSEKGWILHNDKNEQFHHETVIIANGHKLKQFTQTARIPVYSVRGQVSQIPTSSQLLKLKSVLCYDGYLTPADQAKQFHCIGASHVRDCEDRDFSLQEQQENQAKIQLNIAEDWTKEVNTADNLARTGIRCAVRDRIPLVGNVPDFERQADEYRNIFNLRRRKQFIPQAAVFENLYLVGALGSRGLTSAPLLGEILASMIYGEPIPLSEDILHCLNPNRSWMRKLLKGTPVK.

Positions 1–241 (MLKVTTAHIH…KRECLQGFKP (241 aa)) are tRNA (mnm(5)s(2)U34)-methyltransferase. The tract at residues 271-672 (IGGGISSLFS…RKLLKGTPVK (402 aa)) is FAD-dependent cmnm(5)s(2)U34 oxidoreductase.

This sequence in the N-terminal section; belongs to the methyltransferase superfamily. tRNA (mnm(5)s(2)U34)-methyltransferase family. It in the C-terminal section; belongs to the DAO family. It depends on FAD as a cofactor.

It localises to the cytoplasm. The enzyme catalyses 5-aminomethyl-2-thiouridine(34) in tRNA + S-adenosyl-L-methionine = 5-methylaminomethyl-2-thiouridine(34) in tRNA + S-adenosyl-L-homocysteine + H(+). In terms of biological role, catalyzes the last two steps in the biosynthesis of 5-methylaminomethyl-2-thiouridine (mnm(5)s(2)U) at the wobble position (U34) in tRNA. Catalyzes the FAD-dependent demodification of cmnm(5)s(2)U34 to nm(5)s(2)U34, followed by the transfer of a methyl group from S-adenosyl-L-methionine to nm(5)s(2)U34, to form mnm(5)s(2)U34. The sequence is that of tRNA 5-methylaminomethyl-2-thiouridine biosynthesis bifunctional protein MnmC from Mannheimia succiniciproducens (strain KCTC 0769BP / MBEL55E).